A 442-amino-acid chain; its full sequence is UPF0489 protein C5orf22 (442 aa).

A disordered region spans residues 175-210 (SSAKKPKLALEDSENTASTNCDSSSEGLEKDTATQR). Over residues 189-200 (NTASTNCDSSSE) the composition is skewed to polar residues.

This sequence belongs to the UPF0489 family.

The polypeptide is UPF0489 protein C5orf22 (C5orf22) (Homo sapiens (Human)).